The following is a 323-amino-acid chain: MSRTALIENITAMLEDADFLVSDRCAVRPKSFDVAARRDEDLVLLKILGNVDALDAETGAEMRRLGEYLQATPMVIGIRTRDEELKPGVVYFRHGVPVINPDTGYDLFVEGMPPLIYAAPGGLYVSLDGDLLADEREERGWSLGRLATELGVSRRTVSKYEDGMNASIEVAIQLEDLFNEPFSSPVDVLDGAGEVRDADPTPSAPETDPDDEHVLHVLTNAGFTVHPTARAPFKAVSEDEGSSPARVLTGHSTFTPAAEKRARIMSSIGEVARTRSVYFTEENEDRESVDGTALVSCEELADISDPEGIRELIRDRAKAPSEA.

Residues 132–189 (LADEREERGWSLGRLATELGVSRRTVSKYEDGMNASIEVAIQLEDLFNEPFSSPVDVL) form the HTH cro/C1-type domain. A DNA-binding region (H-T-H motif) is located at residues 143-162 (LGRLATELGVSRRTVSKYED). The interval 188-211 (VLDGAGEVRDADPTPSAPETDPDD) is disordered.

The protein is Putative HTH-type transcriptional regulatory protein Hlac_0273 of Halorubrum lacusprofundi (strain ATCC 49239 / DSM 5036 / JCM 8891 / ACAM 34).